We begin with the raw amino-acid sequence, 288 residues long: Bifunctional protein FolD (288 aa).

Residues 166 to 168 (GAS) and Ile232 contribute to the NADP(+) site.

This sequence belongs to the tetrahydrofolate dehydrogenase/cyclohydrolase family. Homodimer.

It carries out the reaction (6R)-5,10-methylene-5,6,7,8-tetrahydrofolate + NADP(+) = (6R)-5,10-methenyltetrahydrofolate + NADPH. It catalyses the reaction (6R)-5,10-methenyltetrahydrofolate + H2O = (6R)-10-formyltetrahydrofolate + H(+). The protein operates within one-carbon metabolism; tetrahydrofolate interconversion. Catalyzes the oxidation of 5,10-methylenetetrahydrofolate to 5,10-methenyltetrahydrofolate and then the hydrolysis of 5,10-methenyltetrahydrofolate to 10-formyltetrahydrofolate. The polypeptide is Bifunctional protein FolD (Klebsiella pneumoniae (strain 342)).